The following is a 415-amino-acid chain: Teichoic acid D-alanyltransferase (415 aa).

Over 1 to 16 (MIDFLKQLPHLEPYGN) the chain is Extracellular. Residues 17–36 (PFYFIYLGIALLPIFIGLFF) traverse the membrane as a helical segment. Over 37–40 (KKRF) the chain is Cytoplasmic. A helical transmembrane segment spans residues 41-56 (AIYECLVSITFIVLAL). Over 57–60 (TGTH) the chain is Extracellular. A helical membrane pass occupies residues 61–87 (ASQILALLFYIVWQIIWVYSYKRYRSQ). Topologically, residues 88 to 90 (RDN) are cytoplasmic. A helical membrane pass occupies residues 91-115 (KWVFYLHSFLVVLPLILVKVEPTIN). The Extracellular segment spans residues 116–125 (GTQSLLNFLG). A helical transmembrane segment spans residues 126-142 (ISYLTFRAVGMIIEMRD). Residues 143 to 149 (GVLKEFT) lie on the Cytoplasmic side of the membrane. An intramembrane segment occupies 150–179 (LGEFLRFMLFMPTFTSGPIDRFKRFNEDYQ). The Cytoplasmic portion of the chain corresponds to 180 to 183 (SIPN). A helical transmembrane segment spans residues 184 to 227 (RDELLNMLEQAVKYIMLGFLYKFVLAQIFGSMLLPPLKAQALSQ). Topologically, residues 228-232 (GGIFN) are extracellular. A helical membrane pass occupies residues 233 to 264 (LPTLGVMYVYGFDLFFDFAGYSMFALAVSNLM). Residues 265–274 (GIKSPINFDK) are Cytoplasmic-facing. An intramembrane segment occupies 275-311 (PFISRDMKEFWNRWHMSLSFWFRDFVFMRLVIVLMRN). Residues 312-316 (KVFKN) lie on the Cytoplasmic side of the membrane. A helical membrane pass occupies residues 317–336 (RNTTSNVAYIINMMVMGFWH). H336 is an active-site residue. Over 337-339 (GIT) the chain is Extracellular. A helical transmembrane segment spans residues 340-373 (WYYIAYGIFHGIGLVINDAWLRKKKTINKDRKKA). Residues 374-381 (GLKPLPEN) lie on the Cytoplasmic side of the membrane. Residues 382–404 (KWTKALGIFITFNTVMLSFLIFS) traverse the membrane as a helical segment. The Extracellular segment spans residues 405–415 (GFLNDLWFTKK).

Belongs to the membrane-bound acyltransferase family.

Its subcellular location is the cell membrane. Its pathway is cell wall biogenesis; lipoteichoic acid biosynthesis. O-acyltransferase that catalyzes D-alanylation of both teichoic acid and lipoteichoic acid (LTA). D-alanylation of LTA plays an important role in modulating the properties of the cell wall in Gram-positive bacteria, influencing the net charge of the cell wall. Catalyzes D-alanylation from DltC carrier protein. This chain is Teichoic acid D-alanyltransferase, found in Streptococcus thermophilus (strain ATCC BAA-250 / LMG 18311).